Consider the following 161-residue polypeptide: Putative 4-hydroxy-4-methyl-2-oxoglutarate aldolase (161 aa).

Residues 75-78 (GDNL) and Arg97 contribute to the substrate site. Asp98 contributes to the a divalent metal cation binding site.

Belongs to the class II aldolase/RraA-like family. In terms of assembly, homotrimer. A divalent metal cation is required as a cofactor.

The enzyme catalyses 4-hydroxy-4-methyl-2-oxoglutarate = 2 pyruvate. The catalysed reaction is oxaloacetate + H(+) = pyruvate + CO2. Functionally, catalyzes the aldol cleavage of 4-hydroxy-4-methyl-2-oxoglutarate (HMG) into 2 molecules of pyruvate. Also contains a secondary oxaloacetate (OAA) decarboxylase activity due to the common pyruvate enolate transition state formed following C-C bond cleavage in the retro-aldol and decarboxylation reactions. This chain is Putative 4-hydroxy-4-methyl-2-oxoglutarate aldolase, found in Alkalilimnicola ehrlichii (strain ATCC BAA-1101 / DSM 17681 / MLHE-1).